We begin with the raw amino-acid sequence, 442 residues long: ATP-dependent protease ATPase subunit HslU (442 aa).

ATP contacts are provided by residues isoleucine 18, 60 to 65 (GVGKTE), aspartate 255, glutamate 320, and arginine 392.

It belongs to the ClpX chaperone family. HslU subfamily. In terms of assembly, a double ring-shaped homohexamer of HslV is capped on each side by a ring-shaped HslU homohexamer. The assembly of the HslU/HslV complex is dependent on binding of ATP.

It localises to the cytoplasm. Its function is as follows. ATPase subunit of a proteasome-like degradation complex; this subunit has chaperone activity. The binding of ATP and its subsequent hydrolysis by HslU are essential for unfolding of protein substrates subsequently hydrolyzed by HslV. HslU recognizes the N-terminal part of its protein substrates and unfolds these before they are guided to HslV for hydrolysis. This is ATP-dependent protease ATPase subunit HslU from Aeromonas hydrophila subsp. hydrophila (strain ATCC 7966 / DSM 30187 / BCRC 13018 / CCUG 14551 / JCM 1027 / KCTC 2358 / NCIMB 9240 / NCTC 8049).